An 83-amino-acid chain; its full sequence is Cytochrome b559 subunit alpha (83 aa).

A helical transmembrane segment spans residues 21–35; the sequence is VIHSITIPSLFIAGW. Residue His23 participates in heme binding.

This sequence belongs to the PsbE/PsbF family. As to quaternary structure, heterodimer of an alpha subunit and a beta subunit. PSII is composed of 1 copy each of membrane proteins PsbA, PsbB, PsbC, PsbD, PsbE, PsbF, PsbH, PsbI, PsbJ, PsbK, PsbL, PsbM, PsbT, PsbX, PsbY, PsbZ, Psb30/Ycf12, at least 3 peripheral proteins of the oxygen-evolving complex and a large number of cofactors. It forms dimeric complexes. It depends on heme b as a cofactor.

The protein resides in the plastid. It localises to the chloroplast thylakoid membrane. Its function is as follows. This b-type cytochrome is tightly associated with the reaction center of photosystem II (PSII). PSII is a light-driven water:plastoquinone oxidoreductase that uses light energy to abstract electrons from H(2)O, generating O(2) and a proton gradient subsequently used for ATP formation. It consists of a core antenna complex that captures photons, and an electron transfer chain that converts photonic excitation into a charge separation. The protein is Cytochrome b559 subunit alpha of Liriodendron tulipifera (Tuliptree).